The chain runs to 566 residues: Phosphatidylinositol 3,4,5-trisphosphate 3-phosphatase TPTE2 (566 aa).

4 consecutive transmembrane segments (helical) span residues 135 to 155 (SFAFGIFGVFLVLLDVTLLLA), 173 to 193 (ISLAIALFFLMDVLLRVFVEG), 208 to 228 (AIIVTPLLVDVVYIFFDIKFL), and 234 to 254 (WIHLVRLLRLIILIRIFHLIH). The Phosphatase tensin-type domain maps to 272–448 (RRYTRDGFDL…GYFAQVKHLY (177 aa)). The active-site Phosphocysteine intermediate is Cys-382. Positions 455-566 (RRILFIKRFI…ILHSFRLVFT (112 aa)) constitute a C2 tensin-type domain.

It is found in the endoplasmic reticulum membrane. The protein localises to the golgi apparatus membrane. The catalysed reaction is a 1,2-diacyl-sn-glycero-3-phospho-(1D-myo-inositol-3,4,5-trisphosphate) + H2O = a 1,2-diacyl-sn-glycero-3-phospho-(1D-myo-inositol-4,5-bisphosphate) + phosphate. In terms of biological role, acts as a lipid phosphatase, removing the phosphate in the D3 position of the inositol ring from phosphatidylinositol 3,4,5-trisphosphate. The sequence is that of Phosphatidylinositol 3,4,5-trisphosphate 3-phosphatase TPTE2 (TPTE2) from Macaca fascicularis (Crab-eating macaque).